Here is a 108-residue protein sequence, read N- to C-terminus: Somatoliberin (108 aa).

The first 20 residues, Met-1–Ser-20, serve as a signal peptide directing secretion. The propeptide occupies Pro-21–Arg-31. The residue at position 75 (Leu-75) is a Leucine amide. Residues Gln-78–Gly-108 constitute a propeptide that is removed on maturation.

Belongs to the glucagon family.

The protein resides in the secreted. GRF is released by the hypothalamus and acts on the adenohypophyse to stimulate the secretion of growth hormone. In Homo sapiens (Human), this protein is Somatoliberin (GHRH).